The primary structure comprises 278 residues: MCRRPDCGFSFSPGPVVLLWCCLLLPIVSSVAVSVAPTAAEKVPAECPELTRRCLLGEVFQGDKYESWLRPLVNVTGRDGPLSQLIRYRPVTPEAANSVLLDDAFLDTLALLYNNPDQLRALLTLLSSDTAPRWMTVMRGYSECGDGSPAVYTCVDDLCRGYDLTRLSYGRSIFTEHVLGFELVPPSLFNVVVAIRNEATRTNRAVRLPVSTAAAPEGITLFYGLYNAVKEFCLRHQLDPPLLRHLDKYYAGLPPELKQTRVNLPAHSRYGPQAVDAR.

Positions 1–30 (MCRRPDCGFSFSPGPVVLLWCCLLLPIVSS) are cleaved as a signal peptide. The gL betaherpesvirus-type domain maps to 43 to 256 (VPAECPELTR…DKYYAGLPPE (214 aa)). C154 and C159 are joined by a disulfide.

Belongs to the herpesviridae glycoprotein L (gL) family. Betaherpesvirinae gL subfamily. Interacts with glycoprotein H (gH); this interaction is necessary for the correct processing and cell surface expression of gH. Forms the envelope pentamer complex (PC) composed of gH, gL, UL128, UL130, and UL131A. The pentamer interacts with host NRP2. Forms the envelope trimer complex composed of gH, gL, and gO. The trimer interacts with host PDGFRA. The trimer also interacts with host EPHA2.

The protein resides in the virion membrane. It is found in the host cell membrane. Its subcellular location is the host Golgi apparatus. The protein localises to the host trans-Golgi network. In terms of biological role, the heterodimer glycoprotein H-glycoprotein L is required for the fusion of viral and plasma membranes leading to virus entry into the host cell. Acts as a functional inhibitor of gH and maintains gH in an inhibited form. Upon binding to host integrins, gL dissociates from gH leading to activation of the viral fusion glycoproteins gB and gH. In human cytomegalovirus, forms two distincts complexes to mediate viral entry, a trimer and a pentamer at the surface of the virion envelope. The gH-gL-gO trimer is required for infection in fibroblasts by interacting with host PDGFRA, and in glioblastoma cells by interacting with host EPHA2. The gH-gL-UL128-UL130-UL131A pentamer is essential for viral entry in epithelial, endothelial and myeloid cells via interaction with host NRP2. This is Envelope glycoprotein L from Homo sapiens (Human).